We begin with the raw amino-acid sequence, 512 residues long: 2,3-bisphosphoglycerate-independent phosphoglycerate mutase (512 aa).

Residues Asp18 and Ser68 each coordinate Mn(2+). Ser68 acts as the Phosphoserine intermediate in catalysis. Substrate is bound by residues His129, 159-160 (RD), Arg191, Arg197, 265-268 (RPDR), and Lys338. The Mn(2+) site is built by Asp403, His407, Asp444, His445, and His462.

This sequence belongs to the BPG-independent phosphoglycerate mutase family. Monomer. Requires Mn(2+) as cofactor.

The catalysed reaction is (2R)-2-phosphoglycerate = (2R)-3-phosphoglycerate. It functions in the pathway carbohydrate degradation; glycolysis; pyruvate from D-glyceraldehyde 3-phosphate: step 3/5. Functionally, catalyzes the interconversion of 2-phosphoglycerate and 3-phosphoglycerate. The sequence is that of 2,3-bisphosphoglycerate-independent phosphoglycerate mutase from Mesomycoplasma hyopneumoniae (strain 232) (Mycoplasma hyopneumoniae).